A 504-amino-acid chain; its full sequence is Probable phenylalanine--tRNA ligase beta subunit (504 aa).

The B5 domain maps to 270–346; the sequence is IKDKSYLLSI…ICYGFNNINM (77 aa). The Mg(2+) site is built by Asp324, Asp330, Glu333, and Asp334.

This sequence belongs to the phenylalanyl-tRNA synthetase beta subunit family. Type 2 subfamily. In terms of assembly, tetramer of two alpha and two beta subunits. Requires Mg(2+) as cofactor.

Its subcellular location is the cytoplasm. It catalyses the reaction tRNA(Phe) + L-phenylalanine + ATP = L-phenylalanyl-tRNA(Phe) + AMP + diphosphate + H(+). The polypeptide is Probable phenylalanine--tRNA ligase beta subunit (Vairimorpha ceranae (strain BRL01) (Microsporidian parasite)).